We begin with the raw amino-acid sequence, 210 residues long: Somatotropin-1 (210 aa).

Residues 1-22 form the signal peptide; it reads MARALVLLSVVLVSLLVNQGRA. Histidine 38 serves as a coordination point for Zn(2+). An intrachain disulfide couples cysteine 71 to cysteine 183. Glutamate 192 contributes to the Zn(2+) binding site. Residues cysteine 200 and cysteine 208 are joined by a disulfide bond.

The protein belongs to the somatotropin/prolactin family.

The protein localises to the secreted. Its function is as follows. Growth hormone plays an important role in growth control and is involved in the regulation of several anabolic processes. Implicated as an osmoregulatory substance important for seawater adaptation. The sequence is that of Somatotropin-1 (gh1) from Carassius auratus (Goldfish).